Consider the following 328-residue polypeptide: Biotin synthase (328 aa).

One can recognise a Radical SAM core domain in the interval 51-282 (FNGNHVDLCS…DKIIRYAGGR (232 aa)). Positions 69, 73, and 76 each coordinate [4Fe-4S] cluster. Residues cysteine 112, cysteine 147, cysteine 207, and arginine 277 each contribute to the [2Fe-2S] cluster site.

It belongs to the radical SAM superfamily. Biotin synthase family. In terms of assembly, homodimer. Requires [4Fe-4S] cluster as cofactor. [2Fe-2S] cluster is required as a cofactor.

It catalyses the reaction (4R,5S)-dethiobiotin + (sulfur carrier)-SH + 2 reduced [2Fe-2S]-[ferredoxin] + 2 S-adenosyl-L-methionine = (sulfur carrier)-H + biotin + 2 5'-deoxyadenosine + 2 L-methionine + 2 oxidized [2Fe-2S]-[ferredoxin]. It functions in the pathway cofactor biosynthesis; biotin biosynthesis; biotin from 7,8-diaminononanoate: step 2/2. Its function is as follows. Catalyzes the conversion of dethiobiotin (DTB) to biotin by the insertion of a sulfur atom into dethiobiotin via a radical-based mechanism. The polypeptide is Biotin synthase (Clostridium acetobutylicum (strain ATCC 824 / DSM 792 / JCM 1419 / IAM 19013 / LMG 5710 / NBRC 13948 / NRRL B-527 / VKM B-1787 / 2291 / W)).